Reading from the N-terminus, the 331-residue chain is 7,8-didemethyl-8-hydroxy-5-deazariboflavin synthase (331 aa).

Positions 6–244 (ITFSKNAFLP…ADVAVQIPPN (239 aa)) constitute a Radical SAM core domain. [4Fe-4S] cluster is bound by residues cysteine 20, cysteine 24, and cysteine 27.

This sequence belongs to the radical SAM superfamily. CofG family. Consists of two subunits, CofG and CofH. The cofactor is [4Fe-4S] cluster.

It catalyses the reaction 5-amino-5-(4-hydroxybenzyl)-6-(D-ribitylimino)-5,6-dihydrouracil + S-adenosyl-L-methionine = 7,8-didemethyl-8-hydroxy-5-deazariboflavin + 5'-deoxyadenosine + L-methionine + NH4(+) + H(+). It participates in cofactor biosynthesis; coenzyme F0 biosynthesis. Catalyzes the radical-mediated synthesis of 7,8-didemethyl-8-hydroxy-5-deazariboflavin from 5-amino-5-(4-hydroxybenzyl)-6-(D-ribitylimino)-5,6-dihydrouracil. The protein is 7,8-didemethyl-8-hydroxy-5-deazariboflavin synthase of Methanoculleus marisnigri (strain ATCC 35101 / DSM 1498 / JR1).